The chain runs to 49 residues: Large ribosomal subunit protein bL33A (49 aa).

Belongs to the bacterial ribosomal protein bL33 family.

The chain is Large ribosomal subunit protein bL33A from Streptococcus pneumoniae (strain Hungary19A-6).